Consider the following 204-residue polypeptide: Large ribosomal subunit protein eL15 (204 aa).

The protein belongs to the eukaryotic ribosomal protein eL15 family. Component of the large ribosomal subunit.

It is found in the cytoplasm. Functionally, component of the large ribosomal subunit. The ribosome is a large ribonucleoprotein complex responsible for the synthesis of proteins in the cell. The chain is Large ribosomal subunit protein eL15 (rpl15) from Silurus asotus (Amur catfish).